The primary structure comprises 2197 residues: Non-reducing polyketide synthase Preu6 (2197 aa).

Residues 14–253 form an N-terminal acylcarrier protein transacylase domain (SAT) region; the sequence is FFCPQSRAPP…HNPENAELAK (240 aa). Positions 375–797 constitute a Ketosynthase family 3 (KS3) domain; sequence DDAIAITGAS…GSNAAVICVE (423 aa). Active-site for beta-ketoacyl synthase activity residues include cysteine 546, histidine 681, and histidine 720. The segment at 901–1198 is malonyl-CoA:ACP transacylase (MAT) domain; it reads LVFSGQNTNA…SKPDSQVFQS (298 aa). The active-site For acyl/malonyl transferase activity is serine 988. Residues 1258 to 1282 form a disordered region; that stretch reads ATEASQASTTSDTIQSTPTQTVQSP. Residues 1260–1281 show a composition bias toward polar residues; that stretch reads EASQASTTSDTIQSTPTQTVQS. The tract at residues 1276 to 1403 is N-terminal hotdog fold; it reads TQTVQSPPKL…GRVILTESSV (128 aa). Residues 1276–1576 enclose the PKS/mFAS DH domain; the sequence is TQTVQSPPKL…FNKMEISKLA (301 aa). The interval 1284 to 1575 is product template (PT) domain; that stretch reads KLISRLASLQ…RFNKMEISKL (292 aa). Histidine 1310 functions as the Proton acceptor; for dehydratase activity in the catalytic mechanism. Residues 1424–1576 are C-terminal hotdog fold; it reads AEKLMSSRAY…FNKMEISKLA (153 aa). Aspartate 1487 serves as the catalytic Proton donor; for dehydratase activity. Polar residues predominate over residues 1581–1591; that stretch reads SVNASSPTGGR. Positions 1581 to 1614 are disordered; sequence SVNASSPTGGRTQPPAAPKTQAQPMASRPSPTPL. 2 Carrier domains span residues 1639-1719 and 1748-1824; these read NDIG…SQKM and NSIT…ATPP. Residues serine 1673 and serine 1782 each carry the O-(pantetheine 4'-phosphoryl)serine modification. The disordered stretch occupies residues 1817-1841; it reads LGASATPPSTTGSSTPGDISTAATT. The span at 1818–1833 shows a compositional bias: low complexity; sequence GASATPPSTTGSSTPG. The interval 1870-2197 is thioesterase (TE) domain; it reads DSYQVKTVEY…PGLDFLIQNA (328 aa). Catalysis depends on for thioesterase activity residues serine 1990 and aspartate 2137.

Pantetheine 4'-phosphate is required as a cofactor.

It carries out the reaction 6 malonyl-CoA + 2 acetyl-CoA + 5 H(+) = o-orsellinate depside + 6 CO2 + 8 CoA + H2O. Non-reducing polyketide synthase; part of a gene cluster that mediates the biosynthesis of a yet unidentified natural product. The first step in the pathway is performed by Preu6 that condenses 2 acetyl-CoA starter units with 6 malonyl-CoA units to produce lecanoric acid (LA), also known as orsellinate depside, an intermediate that has significant antifungal activity against the plant pathogen Botryosphaeria berengeriana. The biosynthesis probably occurs via the formation of 2 orsellinate intermediates fused together by the C-terminal thioesterase (TE) domain that finally releases lecanoric acid. In Preussia isomera (Coprophilous fungus), this protein is Non-reducing polyketide synthase Preu6.